The sequence spans 263 residues: Putative cysteine-rich repeat secretory protein 31 (263 aa).

An N-terminal signal peptide occupies residues 1 to 32 (MHNSYSLSKRLVLVLFLAVVATQLFLIRNVSS). Gnk2-homologous domains lie at 39–141 (YLHH…AIEV) and 146–260 (YDNN…FYPF).

The protein belongs to the cysteine-rich repeat secretory protein family.

It is found in the secreted. This Arabidopsis thaliana (Mouse-ear cress) protein is Putative cysteine-rich repeat secretory protein 31 (CRRSP31).